Here is a 282-residue protein sequence, read N- to C-terminus: Trihydroxynaphthalene reductase (282 aa).

Positions 41, 114, and 147 each coordinate NADP(+). Catalysis depends on proton donor residues Ser164 and Tyr178. The NADP(+) site is built by Tyr178, Lys182, Ile211, and Thr213. Lys182 acts as the Lowers pKa of active site Tyr in catalysis.

This sequence belongs to the short-chain dehydrogenases/reductases (SDR) family. As to quaternary structure, homotetramer.

The protein operates within pigment biosynthesis; melanin biosynthesis. Functionally, catalyzes the NADPH-dependent reduction of 1,3,8-trihydroxynaphthalene (T3HN) into (-)-vermelone. Essential for appressorial penetration of colletotrichum lagenarium. The chain is Trihydroxynaphthalene reductase (THR1) from Colletotrichum orbiculare (strain 104-T / ATCC 96160 / CBS 514.97 / LARS 414 / MAFF 240422) (Cucumber anthracnose fungus).